Consider the following 120-residue polypeptide: MSYRKLGRTSAQRKAMLRDLTTDLIINERIETTETRAKELRSVVEKMITLGKRGDLHARRQAAAYIRNEVANEENNQDALQKLFSDIATRYEERQGGYTRIMKLGPRRGDGAPMAIIELV.

Belongs to the bacterial ribosomal protein bL17 family. As to quaternary structure, part of the 50S ribosomal subunit. Contacts protein L32.

The sequence is that of Large ribosomal subunit protein bL17 from Bacillus subtilis (strain 168).